We begin with the raw amino-acid sequence, 524 residues long: MKEPRIFPRERPTPWTRAPLPPRGRLDGSLGPQGGPVLNTGHPLGVNSDPFLMAAGSLGGNLTPFPRNPSPFPASSGSLASNPAPFPAGARDPSMASFPRGMNPTGTGAVSFPRPGGLLGPGPGPGPTLNPRTGALPGPGPLSNPRLGGLPGPGPMSNPRAGGLLGAGPDPRGGGPMGPGSGPNLRAGVLLTSGNGPPNPRPVGLGPGPNPNLRSGFLGTNPAPRSGVFPGPGLGPNPRPSGLGPGPNLDARAGGLLGTGSGLNLRMAGPQGLDLAPILRAAGLLGANSASFSQASGNMGTSPSSMARVPGPMGPNSGPSSRGIGLPGPNPSPMSRAPGPIGPNSAHFSRPVGPMGVNANPFPRGAGSSAFSQSSGTLASNPATFQRSAGLQGSNPTIFPRASGPLGPNPANFPRATGLQGPSPTTFPRSTGPLGPGQVTFPRPAAGHLGPSPAGPVGINPAPFTRPTGTLGLNPASFPRMNGPAGKSFVPFPRVGSLPGTNPAAFPRPGGPMAAMYPNGMLPP.

The segment covering 1–12 (MKEPRIFPRERP) has biased composition (basic and acidic residues). Disordered stretches follow at residues 1-43 (MKEP…TGHP) and 64-252 (PFPR…LDAR). A compositionally biased stretch (low complexity) spans 129 to 148 (LNPRTGALPGPGPLSNPRLG). Residues 163–181 (GLLGAGPDPRGGGPMGPGS) are compositionally biased toward gly residues. The residue at position 302 (serine 302) is a Phosphoserine. Low complexity predominate over residues 312-323 (PMGPNSGPSSRG). Positions 312 to 332 (PMGPNSGPSSRGIGLPGPNPS) are disordered. Position 364 is an asymmetric dimethylarginine (arginine 364). Arginine 387 carries the post-translational modification Omega-N-methylarginine. Serine 423 carries the post-translational modification Phosphoserine.

The protein belongs to the DERPC family. Ubiquitously expressed, with abundant expression in kidney, skeletal muscle, testis, liver, ovary, and heart and moderate expression in prostate. Expression is significantly reduced in renal and prostate tumors. No differential expression in breast cancer cells, between lobular carcinoma and normal lobules.

It is found in the nucleus. In terms of biological role, potential tumor suppressor. Inhibits prostate tumor cell growth, when overexpressed. In Homo sapiens (Human), this protein is Decreased expression in renal and prostate cancer protein.